The chain runs to 404 residues: Cysteine desulfurase IscS (404 aa).

Residues 75–76 (AT), N155, Q183, and 203–205 (SGH) each bind pyridoxal 5'-phosphate. An N6-(pyridoxal phosphate)lysine modification is found at K206. Residue T243 participates in pyridoxal 5'-phosphate binding. Residue C328 is the Cysteine persulfide intermediate of the active site. C328 contacts [2Fe-2S] cluster.

The protein belongs to the class-V pyridoxal-phosphate-dependent aminotransferase family. NifS/IscS subfamily. Homodimer. Forms a heterotetramer with IscU, interacts with other sulfur acceptors. Pyridoxal 5'-phosphate is required as a cofactor.

It is found in the cytoplasm. The catalysed reaction is (sulfur carrier)-H + L-cysteine = (sulfur carrier)-SH + L-alanine. The protein operates within cofactor biosynthesis; iron-sulfur cluster biosynthesis. Master enzyme that delivers sulfur to a number of partners involved in Fe-S cluster assembly, tRNA modification or cofactor biosynthesis. Catalyzes the removal of elemental sulfur atoms from cysteine to produce alanine. Functions as a sulfur delivery protein for Fe-S cluster synthesis onto IscU, an Fe-S scaffold assembly protein, as well as other S acceptor proteins. The sequence is that of Cysteine desulfurase IscS from Actinobacillus succinogenes (strain ATCC 55618 / DSM 22257 / CCUG 43843 / 130Z).